The chain runs to 85 residues: uncharacterized protein (85 aa).

Residues 44–85 form a disordered region; that stretch reads EAHPSEHNGTVPRSLSQEWAKILAEEAEENSEENNDESEEDN. Positions 50–60 are enriched in polar residues; that stretch reads HNGTVPRSLSQ. Residues 68-85 show a composition bias toward acidic residues; sequence EEAEENSEENNDESEEDN.

This is an uncharacterized protein from Haloarcula hispanica (His1V).